A 562-amino-acid chain; its full sequence is 3-hydroxy-3-methylglutaryl-coenzyme A reductase 2 (562 aa).

The next 2 membrane-spanning stretches (helical) occupy residues 32–56 (ALPL…YFLL) and 77–100 (ICAL…DLIF). The linker stretch occupies residues 101-146 (RSSSDDDVWVNDGMIPCNQSLDCREVLPIKPNSVDPPRESELDSVE). Residue Asn-118 is glycosylated (N-linked (GlcNAc...) asparagine). Residues 147–562 (DEEIVKLVID…DIGPSSQVNR (416 aa)) are catalytic. Glu-240 acts as the Charge relay system in catalysis. Residue Asn-304 is glycosylated (N-linked (GlcNAc...) asparagine). Active-site charge relay system residues include Lys-372 and Asp-448. His-544 acts as the Proton donor in catalysis. An N-linked (GlcNAc...) asparagine glycan is attached at Asn-548. Ser-550 is modified (phosphoserine).

The protein belongs to the HMG-CoA reductase family. In terms of tissue distribution, restricted to young seedlings, roots, and inflorescences. Expressed in root tips, shoot apex, secretory zone of the stigma, microspores, mature pollen grains, gynoecium vascular tissue and fertilized ovules.

It is found in the endoplasmic reticulum membrane. It catalyses the reaction (R)-mevalonate + 2 NADP(+) + CoA = (3S)-3-hydroxy-3-methylglutaryl-CoA + 2 NADPH + 2 H(+). It functions in the pathway metabolic intermediate biosynthesis; (R)-mevalonate biosynthesis; (R)-mevalonate from acetyl-CoA: step 3/3. Its activity is regulated as follows. Regulated at the post-translational level in response to alterations of the sphingolipid and the sterol biosynthetic pathways. Its function is as follows. Catalyzes the synthesis of mevalonate. The specific precursor of all isoprenoid compounds present in plants. This Arabidopsis thaliana (Mouse-ear cress) protein is 3-hydroxy-3-methylglutaryl-coenzyme A reductase 2 (HMG2).